A 278-amino-acid chain; its full sequence is S-formylglutathione hydrolase YeiG (278 aa).

Catalysis depends on charge relay system residues serine 145, aspartate 223, and histidine 256.

It belongs to the esterase D family.

The enzyme catalyses S-formylglutathione + H2O = formate + glutathione + H(+). In terms of biological role, serine hydrolase involved in the detoxification of formaldehyde. Hydrolyzes S-formylglutathione to glutathione and formate. The chain is S-formylglutathione hydrolase YeiG (yeiG) from Escherichia coli (strain UTI89 / UPEC).